Reading from the N-terminus, the 159-residue chain is Transmembrane protein 89 (159 aa).

A signal peptide spans 1 to 24 (MLHVLASLPLLLLLVTSASTHAWS). At 25-63 (RPLWYQVGLDLQPWGCQPKSVEGCRGGLSCPGYWLGPGA) the chain is on the extracellular side. The helical transmembrane segment at 64 to 86 (SRIYPVAAVMITTTMLMICRKIL) threads the bilayer. Residues 87–159 (QGRRRSQATK…QIKGTSTQSG (73 aa)) are Cytoplasmic-facing. Positions 91–110 (RSQATKGEHPQVTTEPCGPW) are disordered.

The protein localises to the membrane. In Homo sapiens (Human), this protein is Transmembrane protein 89 (TMEM89).